Here is a 652-residue protein sequence, read N- to C-terminus: Probable potassium transport system protein Kup (652 aa).

The segment covering 1–20 (MSNDTSPGTSSVDSKSSDPS) has biased composition (low complexity). The disordered stretch occupies residues 1-26 (MSNDTSPGTSSVDSKSSDPSYGVPGH). The next 12 membrane-spanning stretches (helical) occupy residues 36–56 (LSLG…LYAL), 76–96 (LVSL…VMFI), 125–145 (WLIV…MITP), 161–181 (PSFD…LFCI), 193–213 (FGPI…FNII), 228–248 (AIHF…SVVL), 270–290 (LGWY…QCAL), 314–334 (LIIL…TGAF), 362–382 (IYIP…IAMF), 391–411 (AYGI…GVLV), 419–439 (AWQS…FFLS), and 444–464 (IPEG…MLMT).

The protein belongs to the HAK/KUP transporter (TC 2.A.72) family.

The protein resides in the cell inner membrane. It catalyses the reaction K(+)(in) + H(+)(in) = K(+)(out) + H(+)(out). Functionally, transport of potassium into the cell. Likely operates as a K(+):H(+) symporter. This is Probable potassium transport system protein Kup from Zymomonas mobilis subsp. mobilis (strain ATCC 31821 / ZM4 / CP4).